A 769-amino-acid chain; its full sequence is Polymeric immunoglobulin receptor (769 aa).

The first 18 residues, Met1–Thr18, serve as a signal peptide directing secretion. Topologically, residues Gln19–Lys643 are extracellular. Positions Pro21 to Glu126 constitute an Ig-like V-type 1; required for binding to polymeric IgA and IgM domain. A disulfide bridge connects residues Cys40 and Cys110. Asn90, Asn135, and Asn206 each carry an N-linked (GlcNAc...) asparagine glycan. 4 Ig-like V-type domains span residues Asn135–Val237, Pro240–Trp341, Asn353–Ala457, and Pro463–Ala563. 3 disulfides stabilise this stretch: Cys152/Cys220, Cys257/Cys324, and Cys370/Cys440. Residue Asn471 is glycosylated (N-linked (GlcNAc...) asparagine). Cys484 and Cys546 are disulfide-bonded. Disordered stretches follow at residues Arg569–Asn604 and Ala619–Gly640. Residues Ser595 to Asn604 are compositionally biased toward basic and acidic residues. The chain crosses the membrane as a helical span at residues Val644–Ala666. Residues Arg667–Ala769 lie on the Cytoplasmic side of the membrane. Ser678, Ser687, Ser694, and Ser740 each carry phosphoserine. Positions Glu719–Lys741 are disordered. A compositionally biased stretch (basic and acidic residues) spans Glu731–Lys741.

Interacts (mainly via CDR1-like domain) with dimeric IgA. Interacts (mainly via CDR2-like domain) with pentameric IgM. In terms of assembly, either free or part of the secretory IgA (sIgA) complex that consists of two, four or five IgA monomers, and two additional non-Ig polypeptides, namely the JCHAIN and the secretory component (the proteolytic product of PIGR). Free secretory component interacts with bacterial antigens toxA of C.difficile and eae of E.coli. In terms of processing, N-glycosylated. N-glycosylation is required for anchoring IgA molecules to mucus, but is not necessary for Ig binding.

The protein localises to the cell membrane. Its subcellular location is the secreted. In terms of biological role, mediates selective transcytosis of polymeric IgA and IgM across mucosal epithelial cells. Binds polymeric IgA and IgM at the basolateral surface of epithelial cells. The complex is then transported across the cell to be secreted at the apical surface. During this process, a cleavage occurs that separates the extracellular (known as the secretory component) from the transmembrane segment. Its function is as follows. Through its N-linked glycans ensures anchoring of secretory IgA (sIgA) molecules to mucus lining the epithelial surface to neutralize extracellular pathogens. On its own (free form) may act as a non-specific microbial scavenger to prevent pathogen interaction with epithelial cells. This chain is Polymeric immunoglobulin receptor (Pigr), found in Rattus norvegicus (Rat).